The primary structure comprises 156 residues: Ribosomal RNA large subunit methyltransferase H (156 aa).

Residues leucine 73, glycine 104, and leucine 123 to leucine 128 contribute to the S-adenosyl-L-methionine site.

This sequence belongs to the RNA methyltransferase RlmH family. As to quaternary structure, homodimer.

The protein resides in the cytoplasm. The enzyme catalyses pseudouridine(1915) in 23S rRNA + S-adenosyl-L-methionine = N(3)-methylpseudouridine(1915) in 23S rRNA + S-adenosyl-L-homocysteine + H(+). Its function is as follows. Specifically methylates the pseudouridine at position 1915 (m3Psi1915) in 23S rRNA. The protein is Ribosomal RNA large subunit methyltransferase H of Shewanella frigidimarina (strain NCIMB 400).